The sequence spans 634 residues: Chaperone protein HtpG (634 aa).

Residues 1 to 342 are a; substrate-binding; it reads MSVETQKETL…SNDLSLNVSR (342 aa). The b stretch occupies residues 343–559; sequence EILQKDPVID…EQDLGLQMRQ (217 aa). The segment at 560 to 634 is c; that stretch reads ILEASGQKVP…LNKLLVELSA (75 aa).

This sequence belongs to the heat shock protein 90 family. Homodimer.

It localises to the cytoplasm. Functionally, molecular chaperone. Has ATPase activity. The chain is Chaperone protein HtpG from Pseudomonas aeruginosa (strain ATCC 15692 / DSM 22644 / CIP 104116 / JCM 14847 / LMG 12228 / 1C / PRS 101 / PAO1).